We begin with the raw amino-acid sequence, 194 residues long: Ion-translocating oxidoreductase complex subunit B (194 aa).

Residues 1 to 26 (MSSILIAVIAIAALALVFGLILGFAS) form a hydrophobic region. In terms of domain architecture, 4Fe-4S spans 32-90 (ESDPIVEQIDAILPQTQCGQCGYPGCKPYAEAIANGDMINKCPPGGQATIEKLADLMGV). [4Fe-4S] cluster contacts are provided by cysteine 49, cysteine 52, cysteine 57, cysteine 73, cysteine 114, cysteine 117, cysteine 120, cysteine 124, cysteine 144, cysteine 147, cysteine 150, and cysteine 154. 4Fe-4S ferredoxin-type domains lie at 105-134 (KVAFIHEDMCIGCTKCIQACPVDAIVGGTK) and 135-164 (ALHTVIESECTGCDLCVAPCPTDCIEMIPV).

This sequence belongs to the 4Fe4S bacterial-type ferredoxin family. RnfB subfamily. In terms of assembly, the complex is composed of six subunits: RnfA, RnfB, RnfC, RnfD, RnfE and RnfG. Requires [4Fe-4S] cluster as cofactor.

It is found in the cell inner membrane. Functionally, part of a membrane-bound complex that couples electron transfer with translocation of ions across the membrane. The chain is Ion-translocating oxidoreductase complex subunit B from Aliivibrio fischeri (strain ATCC 700601 / ES114) (Vibrio fischeri).